A 520-amino-acid polypeptide reads, in one-letter code: Cell adhesion molecule CEACAM2 (520 aa).

The first 34 residues, 1–34 (MELASAHLHKGQVPWFGLLLTASLLASWSPPTTA), serve as a signal peptide directing secretion. One can recognise an Ig-like V-type domain in the interval 35 to 141 (QVTVMAFPLH…RVLTGQFHVH (107 aa)). Residues 35–422 (QVTVMAFPLH…IFDSTYDISD (388 aa)) lie on the Extracellular side of the membrane. 16 N-linked (GlcNAc...) asparagine glycosylation sites follow: N87, N104, N148, N152, N175, N199, N206, N210, N226, N258, N290, N294, N304, N317, N333, and N361. 3 consecutive Ig-like C2-type domains span residues 145 to 234 (LKSN…FSLN), 239 to 319 (PDTP…KNIT), and 327 to 411 (PSLQ…IKLE). C167 and C217 are disulfide-bonded. Residues C261 and C301 are joined by a disulfide bond. Cysteines 346 and 394 form a disulfide. The helical transmembrane segment at 423–443 (VPIAVIITGAVAGVILIAGLA) threads the bilayer. Over 444 to 520 (YRLCSRKSRW…ETVYSEVKKK (77 aa)) the chain is Cytoplasmic. The interval 457–520 (QRDLTEHKPS…ETVYSEVKKK (64 aa)) is disordered. A compositionally biased stretch (polar residues) spans 466–480 (SASNHNLAPSDNSPN). At Y487 the chain carries Phosphotyrosine. The segment covering 490 to 513 (LNFNSQQPNRPTSAPSSPRATETV) has biased composition (polar residues). Position 502 is a phosphoserine (S502). The residue at position 514 (Y514) is a Phosphotyrosine.

It belongs to the immunoglobulin superfamily. CEA family. In terms of assembly, interacts weakly with MHV spike protein in tissue culture. As to expression, isoform 2 is detected in elongating spermatids within the seminiferous epithelium (at protein level). Expressed in kidney, colon, uterus, gut mononuclear cells, crypt epithelia of intestinal tissues, and to a lesser extent, in spleen. Expressed in brain including VMH, globus pallidus, ventral pallidum, striatum, olfactory bulb and hippocampus. Also detected in rectal carcinoma cell line CMT93. Isoform 2 and isoform 3 are expressed in testis. Isoform 2 is detected in seminiferous tubule, not detected in epididymal spermatozoa. Also not observed on spermatogonia, spermatocytes, round spermatids or somatic Sertoli cells. During stages I-VII of spermatogenesis, detected on the elongating spermatids. At spermiation (stage VIII) and subsequent stages IX-XII, levels are drastically reduced or absent in the seminiferous tubules. Sometimes weakly detected in the apical region of stage-VIII seminiferous epithelium. Isoform 2 level is very low in stomach, kidney, intestine, liver and spleen.

Its subcellular location is the cell membrane. Controls energy balance and peripheral insulin action. Involved in the regulation of feeding behavior particularly in the ventromedial nucleus of hypothalamus (VMH) regulation of food intake. Has a role in the regulation of metabolic rate and insulin sensitivity or resistance via effects on brown adipogenesis, sympathetic nervous outflow to brown adipose tissue, spontaneous activity and energy expenditure in skeletal muscle. In case of murine coronavirus (MHV) infection, does probably not serve as functional receptor for the virus. Its function is as follows. Isoform 2 may be an adhesion molecule contributing to cell to cell adhesion between elongating spermatids and Sertoli cells within the seminiferous epithelium. The polypeptide is Cell adhesion molecule CEACAM2 (Mus musculus (Mouse)).